The primary structure comprises 199 residues: MTTLTAQQIACVYAWLAQLFSRELDDEQLTQIASAQMAEWFSLLKSEPPLTAAVNGLENSIATLTVRDDARLELAADFCGLFLMTDKQAALPYASANKQDEQEIKRLLVEAGMETSGNFNEPADHLAIYLDLLSHLHFSLGEGTVPARRIDGLRQKTLTALREWLPEFAARCRQYDSFGFYAALSQLLLVLVECDYQKR.

Belongs to the TorD/DmsD family. TorD subfamily.

It is found in the cytoplasm. Functionally, involved in the biogenesis of TorA. Acts on TorA before the insertion of the molybdenum cofactor and, as a result, probably favors a conformation of the apoenzyme that is competent for acquiring the cofactor. The sequence is that of Chaperone protein TorD from Escherichia coli O127:H6 (strain E2348/69 / EPEC).